The sequence spans 426 residues: Glutamate-1-semialdehyde 2,1-aminomutase (426 aa).

Residue Lys-265 is modified to N6-(pyridoxal phosphate)lysine.

It belongs to the class-III pyridoxal-phosphate-dependent aminotransferase family. HemL subfamily. As to quaternary structure, homodimer. Requires pyridoxal 5'-phosphate as cofactor.

The protein localises to the cytoplasm. The catalysed reaction is (S)-4-amino-5-oxopentanoate = 5-aminolevulinate. It functions in the pathway porphyrin-containing compound metabolism; protoporphyrin-IX biosynthesis; 5-aminolevulinate from L-glutamyl-tRNA(Glu): step 2/2. In Aliarcobacter butzleri (strain RM4018) (Arcobacter butzleri), this protein is Glutamate-1-semialdehyde 2,1-aminomutase.